Consider the following 684-residue polypeptide: Pescadillo homolog (684 aa).

A disordered region spans residues 284 to 352 (DAAAAEASSN…DSDEEADDEA (69 aa)). Low complexity predominate over residues 285–294 (AAAAEASSNA). The span at 296–310 (TRKDGKKLSTRDVKR) shows a compositional bias: basic and acidic residues. Positions 342-352 (QDSDEEADDEA) are enriched in acidic residues. The 100-residue stretch at 387 to 486 (PLPMLFSRYV…QILPTDPYRP (100 aa)) folds into the BRCT domain. 2 disordered regions span residues 508–580 (GYVP…ALLA) and 612–684 (AASL…NKKP). Residues 528-543 (ADEDEDEDEDEDEDED) show a composition bias toward acidic residues. A compositionally biased stretch (basic and acidic residues) spans 544-570 (KAGSGRGDDKNVAAREQDAVEKHDKTP). Over residues 612-624 (AASLKSHKKKKRT) the composition is skewed to basic residues. Residues 663–675 (KKKEEKMRLEAKK) are compositionally biased toward basic and acidic residues.

This sequence belongs to the pescadillo family. Component of the NOP7 complex, composed of ERB1, NOP7 and YTM1. The complex is held together by ERB1, which interacts with NOP7 via its N-terminal domain and with YTM1 via a high-affinity interaction between the seven-bladed beta-propeller domains of the 2 proteins. The NOP7 complex associates with the 66S pre-ribosome.

The protein localises to the nucleus. It localises to the nucleolus. The protein resides in the nucleoplasm. In terms of biological role, component of the NOP7 complex, which is required for maturation of the 25S and 5.8S ribosomal RNAs and formation of the 60S ribosome. The sequence is that of Pescadillo homolog from Malassezia globosa (strain ATCC MYA-4612 / CBS 7966) (Dandruff-associated fungus).